The chain runs to 471 residues: ATP synthase subunit beta (471 aa).

Position 154–161 (G154–T161) interacts with ATP.

Belongs to the ATPase alpha/beta chains family. In terms of assembly, F-type ATPases have 2 components, CF(1) - the catalytic core - and CF(0) - the membrane proton channel. CF(1) has five subunits: alpha(3), beta(3), gamma(1), delta(1), epsilon(1). CF(0) has three main subunits: a(1), b(2) and c(9-12). The alpha and beta chains form an alternating ring which encloses part of the gamma chain. CF(1) is attached to CF(0) by a central stalk formed by the gamma and epsilon chains, while a peripheral stalk is formed by the delta and b chains.

It is found in the cell membrane. It catalyses the reaction ATP + H2O + 4 H(+)(in) = ADP + phosphate + 5 H(+)(out). Functionally, produces ATP from ADP in the presence of a proton gradient across the membrane. The catalytic sites are hosted primarily by the beta subunits. The protein is ATP synthase subunit beta of Mesomycoplasma hyopneumoniae (strain 7448) (Mycoplasma hyopneumoniae).